Reading from the N-terminus, the 201-residue chain is UPF0301 protein Arad_1256 (201 aa).

The protein belongs to the UPF0301 (AlgH) family.

The sequence is that of UPF0301 protein Arad_1256 from Rhizobium rhizogenes (strain K84 / ATCC BAA-868) (Agrobacterium radiobacter).